Reading from the N-terminus, the 446-residue chain is Exodeoxyribonuclease 7 large subunit (446 aa).

It belongs to the XseA family. As to quaternary structure, heterooligomer composed of large and small subunits.

It is found in the cytoplasm. It catalyses the reaction Exonucleolytic cleavage in either 5'- to 3'- or 3'- to 5'-direction to yield nucleoside 5'-phosphates.. Functionally, bidirectionally degrades single-stranded DNA into large acid-insoluble oligonucleotides, which are then degraded further into small acid-soluble oligonucleotides. The sequence is that of Exodeoxyribonuclease 7 large subunit from Streptococcus pneumoniae (strain Hungary19A-6).